Here is a 131-residue protein sequence, read N- to C-terminus: Lactose permease (131 aa).

The Cytoplasmic segment spans residues 1 to 13; the sequence is MKFSELAPRERHN. Residues 14–34 traverse the membrane as a helical segment; it reads FVYFLLFFFFYHFIMSAYFPF. Residues 35–50 lie on the Periplasmic side of the membrane; sequence FPVWLADVNHLTKTET. Residues 51–71 traverse the membrane as a helical segment; it reads GIVFSSISLFAIIFQPVFGLM. Topologically, residues 72-80 are cytoplasmic; it reads SDKLGLRKH. Residues 81–101 traverse the membrane as a helical segment; the sequence is LLWTITVLLILFAPFFIFVFS. A topological domain (periplasmic) is located at residue Pro102. Residues 103 to 123 traverse the membrane as a helical segment; the sequence is LLQMNIIAGSLVGGIYLGIVF. Topologically, residues 124-131 are cytoplasmic; that stretch reads STAPGVGS.

Belongs to the major facilitator superfamily. Oligosaccharide:H(+) symporter (OHS) (TC 2.A.1.5) family.

It is found in the cell inner membrane. It carries out the reaction lactose(in) + H(+)(in) = lactose(out) + H(+)(out). Its function is as follows. Responsible for transport of beta-galactosides into the cell, with the concomitant import of a proton (symport system). The protein is Lactose permease (lacY) of Klebsiella pneumoniae.